Here is a 292-residue protein sequence, read N- to C-terminus: Protein/nucleic acid deglycase HchA (292 aa).

Residues 1 to 12 are compositionally biased toward polar residues; that stretch reads MSQDVNELSKQP. The disordered stretch occupies residues 1–23; it reads MSQDVNELSKQPTPDKAEDNAFF. The active-site Nucleophile is Cys190.

It belongs to the peptidase C56 family. HchA subfamily.

Its subcellular location is the cytoplasm. It catalyses the reaction N(omega)-(1-hydroxy-2-oxopropyl)-L-arginyl-[protein] + H2O = lactate + L-arginyl-[protein] + H(+). The catalysed reaction is N(6)-(1-hydroxy-2-oxopropyl)-L-lysyl-[protein] + H2O = lactate + L-lysyl-[protein] + H(+). The enzyme catalyses S-(1-hydroxy-2-oxopropyl)-L-cysteinyl-[protein] + H2O = lactate + L-cysteinyl-[protein] + H(+). It carries out the reaction N(omega)-(1-hydroxy-2-oxoethyl)-L-arginyl-[protein] + H2O = L-arginyl-[protein] + glycolate + H(+). It catalyses the reaction N(6)-(1-hydroxy-2-oxoethyl)-L-lysyl-[protein] + H2O = glycolate + L-lysyl-[protein] + H(+). The catalysed reaction is S-(1-hydroxy-2-oxoethyl)-L-cysteinyl-[protein] + H2O = glycolate + L-cysteinyl-[protein] + H(+). The enzyme catalyses N(2)-(1-hydroxy-2-oxopropyl)-dGTP + H2O = lactate + dGTP + H(+). It carries out the reaction N(2)-(1-hydroxy-2-oxopropyl)-GTP + H2O = lactate + GTP + H(+). It catalyses the reaction N(2)-(1-hydroxy-2-oxopropyl)-GDP + H2O = lactate + GDP + H(+). The catalysed reaction is N(2)-(1-hydroxy-2-oxopropyl)-GMP + H2O = lactate + GMP + H(+). The enzyme catalyses N(2)-(1-hydroxy-2-oxoethyl)-dGTP + H2O = dGTP + glycolate + H(+). It carries out the reaction N(2)-(1-hydroxy-2-oxoethyl)-GTP + H2O = glycolate + GTP + H(+). It catalyses the reaction N(2)-(1-hydroxy-2-oxoethyl)-GDP + H2O = glycolate + GDP + H(+). The catalysed reaction is N(2)-(1-hydroxy-2-oxoethyl)-GMP + H2O = glycolate + GMP + H(+). The enzyme catalyses an N(2)-(1-hydroxy-2-oxopropyl)-guanosine in RNA + H2O = a guanosine in RNA + lactate + H(+). It carries out the reaction an N(2)-(1-hydroxy-2-oxopropyl)-2'-deoxyguanosine in DNA + H2O = a 2'-deoxyguanosine in DNA + lactate + H(+). It catalyses the reaction an N(2)-(1-hydroxy-2-oxoethyl)-guanosine in RNA + H2O = a guanosine in RNA + glycolate + H(+). The catalysed reaction is an N(2)-(1-hydroxy-2-oxoethyl)-2'-deoxyguanosine in DNA + H2O = a 2'-deoxyguanosine in DNA + glycolate + H(+). Its function is as follows. Protein and nucleotide deglycase that catalyzes the deglycation of the Maillard adducts formed between amino groups of proteins or nucleotides and reactive carbonyl groups of glyoxals. Thus, functions as a protein deglycase that repairs methylglyoxal- and glyoxal-glycated proteins, and releases repaired proteins and lactate or glycolate, respectively. Deglycates cysteine, arginine and lysine residues in proteins, and thus reactivates these proteins by reversing glycation by glyoxals. Acts on early glycation intermediates (hemithioacetals and aminocarbinols), preventing the formation of Schiff bases and advanced glycation endproducts (AGE). Also functions as a nucleotide deglycase able to repair glycated guanine in the free nucleotide pool (GTP, GDP, GMP, dGTP) and in DNA and RNA. Is thus involved in a major nucleotide repair system named guanine glycation repair (GG repair), dedicated to reversing methylglyoxal and glyoxal damage via nucleotide sanitization and direct nucleic acid repair. Plays an important role in protecting cells from carbonyl stress. This Staphylococcus aureus (strain Mu3 / ATCC 700698) protein is Protein/nucleic acid deglycase HchA.